The chain runs to 744 residues: Elongation factor G, mitochondrial (744 aa).

Residues 39–316 form the tr-type G domain; the sequence is EKIRNIGISA…AVIDYLPNPG (278 aa). Residues 48–55, 115–119, and 169–172 contribute to the GTP site; these read AHIDSGKT, DTPGH, and NKLD. The span at 725 to 735 shows a compositional bias: polar residues; it reads VRQYQETQGAS. Residues 725–744 are disordered; the sequence is VRQYQETQGASQPDKKKKKN.

It belongs to the TRAFAC class translation factor GTPase superfamily. Classic translation factor GTPase family. EF-G/EF-2 subfamily.

Its subcellular location is the mitochondrion. Its pathway is protein biosynthesis; polypeptide chain elongation. Mitochondrial GTPase that catalyzes the GTP-dependent ribosomal translocation step during translation elongation. During this step, the ribosome changes from the pre-translocational (PRE) to the post-translocational (POST) state as the newly formed A-site-bound peptidyl-tRNA and P-site-bound deacylated tRNA move to the P and E sites, respectively. Catalyzes the coordinated movement of the two tRNA molecules, the mRNA and conformational changes in the ribosome. Essential during development as it acts as a retrograde signal from mitochondria to the nucleus to slow down cell proliferation if mitochondrial energy output is low. The sequence is that of Elongation factor G, mitochondrial from Drosophila pseudoobscura pseudoobscura (Fruit fly).